Consider the following 276-residue polypeptide: NAD kinase (276 aa).

Residue Asp-68 is the Proton acceptor of the active site. NAD(+) is bound by residues 68–69 (DG), Arg-73, 138–139 (NE), Lys-149, Asp-168, 179–184 (TAYSLS), and Gln-237.

Belongs to the NAD kinase family. A divalent metal cation is required as a cofactor.

It localises to the cytoplasm. It catalyses the reaction NAD(+) + ATP = ADP + NADP(+) + H(+). In terms of biological role, involved in the regulation of the intracellular balance of NAD and NADP, and is a key enzyme in the biosynthesis of NADP. Catalyzes specifically the phosphorylation on 2'-hydroxyl of the adenosine moiety of NAD to yield NADP. This Methanopyrus kandleri (strain AV19 / DSM 6324 / JCM 9639 / NBRC 100938) protein is NAD kinase.